Consider the following 178-residue polypeptide: SPbeta prophage-derived uncharacterized protein YonC (178 aa).

This is SPbeta prophage-derived uncharacterized protein YonC (yonC) from Bacillus subtilis (strain 168).